A 200-amino-acid chain; its full sequence is Probable GTP-binding protein EngB (200 aa).

The EngB-type G domain occupies 25–199 (SGYEVAFAGR…ISVLDRWYEW (175 aa)). GTP is bound by residues 33-40 (GRSNAGKS), 60-64 (GRTQL), 78-81 (DLPG), 145-148 (TKAD), and 178-180 (FSS). Residues serine 40 and threonine 62 each contribute to the Mg(2+) site.

This sequence belongs to the TRAFAC class TrmE-Era-EngA-EngB-Septin-like GTPase superfamily. EngB GTPase family. It depends on Mg(2+) as a cofactor.

Its function is as follows. Necessary for normal cell division and for the maintenance of normal septation. The chain is Probable GTP-binding protein EngB from Legionella pneumophila (strain Paris).